An 81-amino-acid chain; its full sequence is Small ribosomal subunit protein uS17 (81 aa).

This sequence belongs to the universal ribosomal protein uS17 family. Part of the 30S ribosomal subunit.

In terms of biological role, one of the primary rRNA binding proteins, it binds specifically to the 5'-end of 16S ribosomal RNA. The protein is Small ribosomal subunit protein uS17 of Protochlamydia amoebophila (strain UWE25).